Reading from the N-terminus, the 113-residue chain is Large ribosomal subunit protein bL19 (113 aa).

Belongs to the bacterial ribosomal protein bL19 family.

Its function is as follows. This protein is located at the 30S-50S ribosomal subunit interface and may play a role in the structure and function of the aminoacyl-tRNA binding site. The polypeptide is Large ribosomal subunit protein bL19 (Corynebacterium diphtheriae (strain ATCC 700971 / NCTC 13129 / Biotype gravis)).